We begin with the raw amino-acid sequence, 547 residues long: Chaperonin GroEL 1 (547 aa).

Residues 30 to 33 (TLGP), K51, 87 to 91 (DGTTT), G415, and D496 each bind ATP.

This sequence belongs to the chaperonin (HSP60) family. In terms of assembly, forms a cylinder of 14 subunits composed of two heptameric rings stacked back-to-back. Interacts with the co-chaperonin GroES.

It localises to the cytoplasm. It catalyses the reaction ATP + H2O + a folded polypeptide = ADP + phosphate + an unfolded polypeptide.. In terms of biological role, together with its co-chaperonin GroES, plays an essential role in assisting protein folding. The GroEL-GroES system forms a nano-cage that allows encapsulation of the non-native substrate proteins and provides a physical environment optimized to promote and accelerate protein folding. The polypeptide is Chaperonin GroEL 1 (Bradyrhizobium sp. (strain BTAi1 / ATCC BAA-1182)).